We begin with the raw amino-acid sequence, 415 residues long: S-inosyl-L-homocysteine hydrolase (415 aa).

Asp-123 and Glu-148 together coordinate substrate. Position 149-151 (Thr-149–Thr-151) interacts with NAD(+). Residues Lys-178 and Asp-182 each coordinate substrate. NAD(+) contacts are provided by residues Asn-183, Gly-212–Gly-217, Glu-235, Ala-291–His-293, and Asn-337.

The protein belongs to the adenosylhomocysteinase family. Requires NAD(+) as cofactor.

The protein resides in the cytoplasm. The enzyme catalyses S-inosyl-L-homocysteine + H2O = L-homocysteine + inosine. Its pathway is amino-acid biosynthesis; S-adenosyl-L-methionine biosynthesis. Catalyzes the hydrolysis of S-inosyl-L-homocysteine (SIH) to L-homocysteine (Hcy) and inosine. Likely functions in a S-adenosyl-L-methionine (SAM) recycling pathway from S-adenosyl-L-homocysteine (SAH) produced from SAM-dependent methylation reactions. Can also catalyze the reverse reaction in vitro, i.e. the synthesis of SIH from Hcy and inosine. This chain is S-inosyl-L-homocysteine hydrolase, found in Methanococcus maripaludis (strain DSM 14266 / JCM 13030 / NBRC 101832 / S2 / LL).